The chain runs to 142 residues: MLQHKILGLDVGSRTVGIAISDIMGWTAQGLDTLRINEENNELGIDQLVDIIKKHNVGTVVIGLPKNMNNSIGFRGEASLTYKEKLLEAYPSIEIVMWDERLSTMAAERSLLEADVSRQKRKQLIDKMAAVFILQGYLDSLH.

This sequence belongs to the YqgF nuclease family.

Its subcellular location is the cytoplasm. In terms of biological role, could be a nuclease involved in processing of the 5'-end of pre-16S rRNA. The sequence is that of Putative pre-16S rRNA nuclease from Staphylococcus aureus (strain bovine RF122 / ET3-1).